The chain runs to 501 residues: UPF0371 protein CD630_08980 (501 aa).

Belongs to the UPF0371 family.

The polypeptide is UPF0371 protein CD630_08980 (Clostridioides difficile (strain 630) (Peptoclostridium difficile)).